A 267-amino-acid polypeptide reads, in one-letter code: Nanos homolog 1 (267 aa).

The interval 40-56 (FSSWNDYLGLATLITRA) is essential for its translational repressor activity. The interval 57–94 (SDRGSPHEGPGPTAAGPTMGPPEDDEDDDGEEPEAGGR) is disordered. Residues 78–90 (PEDDEDDDGEEPE) are compositionally biased toward acidic residues. The Nanos-type zinc-finger motif lies at 188–242 (VCVFCRNNKEAVALYTTHILKGPDGRVLCPVLRRYTCPLCGASGDNAHTIKYCPL). Residues Cys-189, Cys-192, His-205, Cys-216, Cys-224, Cys-227, His-235, and Cys-240 each coordinate Zn(2+). 2 short sequence motifs (C2HC) span residues 189–216 (CVFC…RVLC) and 224–240 (CPLC…IKYC). The segment at 243–267 (SKVPPPTVRPPPRSNRDSLPSKKLR) is disordered. The span at 244–255 (KVPPPTVRPPPR) shows a compositional bias: pro residues. The segment covering 256–267 (SNRDSLPSKKLR) has biased composition (basic and acidic residues).

The protein belongs to the nanos family. As to quaternary structure, interacts with PUM2, SNAPIN and CTNNB1. Interacts (via N-terminal region) with CTNND1. Interacts with DDX20 (via N-terminal region). In terms of tissue distribution, expressed in the oocyte. Transiently expressed in eight-cell embryos. At 12.5 dpc, it is re-expressed in the central nervous system and the expression continues in the adult brain, in which the hippocampal formation is the predominant region. Expressed in the seminiferous tubules of mature testis, but not in the primordial germ cells.

It localises to the cytoplasm. Its subcellular location is the perinuclear region. In terms of biological role, may act as a translational repressor which regulates translation of specific mRNAs by forming a complex with PUM2 that associates with the 3'-UTR of mRNA targets. Capable of interfering with the proadhesive and anti-invasive functions of E-cadherin. Up-regulates the production of MMP14 to promote tumor cell invasion. Not essential for normal development. This chain is Nanos homolog 1 (Nanos1), found in Mus musculus (Mouse).